A 180-amino-acid chain; its full sequence is Telokin-like protein 20 (180 aa).

The tract at residues 112-180 (SKTDAAVHTS…KQKLDNAKQD (69 aa)) is disordered. Over residues 156–165 (DFEENIDDGD) the composition is skewed to acidic residues.

This Lepidoptera (butterflies and moths) protein is Telokin-like protein 20 (TLP20).